Here is a 495-residue protein sequence, read N- to C-terminus: Probable serine/threonine-protein kinase DDB_G0292354 (495 aa).

A Protein kinase domain is found at 16–275 (WTVVKKIGQG…PNYVFLQTLL (260 aa)). ATP is bound by residues 22-30 (IGQGAFGEI) and Lys45. Catalysis depends on Asp136, which acts as the Proton acceptor. The interval 293–469 (EVQTNSGASS…NGNGSNSQPI (177 aa)) is disordered. Low complexity-rich tracts occupy residues 295 to 333 (QTNSGASSSSSNTTQQQQQQQQQQQQRNLNQSGLNNSSA) and 354 to 364 (NNSNNNNNNNN). Positions 385 to 395 (ESNSQIANSSE) are enriched in polar residues. Over residues 435-466 (SNNNNINNNNNNYNNNNNNNNNSHMNGNGSNS) the composition is skewed to low complexity.

This sequence belongs to the protein kinase superfamily. CK1 Ser/Thr protein kinase family.

The polypeptide is Probable serine/threonine-protein kinase DDB_G0292354 (Dictyostelium discoideum (Social amoeba)).